Reading from the N-terminus, the 668-residue chain is DNA ligase (668 aa).

Residues 32–36, 81–82, and glutamate 111 each bind NAD(+); these read DVEYD and SL. Lysine 113 (N6-AMP-lysine intermediate) is an active-site residue. NAD(+)-binding residues include arginine 134, glutamate 171, lysine 290, and lysine 314. Residues cysteine 408, cysteine 411, cysteine 426, and cysteine 432 each contribute to the Zn(2+) site. The region spanning 591-668 is the BRCT domain; sequence EEDLSLKGQT…DEEALIAILS (78 aa).

Belongs to the NAD-dependent DNA ligase family. LigA subfamily. Mg(2+) is required as a cofactor. The cofactor is Mn(2+).

It catalyses the reaction NAD(+) + (deoxyribonucleotide)n-3'-hydroxyl + 5'-phospho-(deoxyribonucleotide)m = (deoxyribonucleotide)n+m + AMP + beta-nicotinamide D-nucleotide.. In terms of biological role, DNA ligase that catalyzes the formation of phosphodiester linkages between 5'-phosphoryl and 3'-hydroxyl groups in double-stranded DNA using NAD as a coenzyme and as the energy source for the reaction. It is essential for DNA replication and repair of damaged DNA. This is DNA ligase from Shewanella piezotolerans (strain WP3 / JCM 13877).